The chain runs to 259 residues: 4-hydroxy-tetrahydrodipicolinate reductase (259 aa).

NAD(+) is bound by residues 9-14 (GAGGRM) and E35. R36 is an NADP(+) binding site. NAD(+) contacts are provided by residues 92–94 (GTT) and 116–119 (APNM). The active-site Proton donor/acceptor is H149. H150 lines the (S)-2,3,4,5-tetrahydrodipicolinate pocket. The active-site Proton donor is K153. Residue 159 to 160 (GT) participates in (S)-2,3,4,5-tetrahydrodipicolinate binding.

It belongs to the DapB family.

It localises to the cytoplasm. The enzyme catalyses (S)-2,3,4,5-tetrahydrodipicolinate + NAD(+) + H2O = (2S,4S)-4-hydroxy-2,3,4,5-tetrahydrodipicolinate + NADH + H(+). The catalysed reaction is (S)-2,3,4,5-tetrahydrodipicolinate + NADP(+) + H2O = (2S,4S)-4-hydroxy-2,3,4,5-tetrahydrodipicolinate + NADPH + H(+). It functions in the pathway amino-acid biosynthesis; L-lysine biosynthesis via DAP pathway; (S)-tetrahydrodipicolinate from L-aspartate: step 4/4. Its function is as follows. Catalyzes the conversion of 4-hydroxy-tetrahydrodipicolinate (HTPA) to tetrahydrodipicolinate. The sequence is that of 4-hydroxy-tetrahydrodipicolinate reductase from Oleidesulfovibrio alaskensis (strain ATCC BAA-1058 / DSM 17464 / G20) (Desulfovibrio alaskensis).